Here is a 351-residue protein sequence, read N- to C-terminus: Small ribosomal subunit biogenesis GTPase RsgA (351 aa).

The span at 1–12 (MAKHKLSKGQQR) shows a compositional bias: basic residues. The interval 1-37 (MAKHKLSKGQQRRVRENHQRRLKKQDNKPEMDDNQLG) is disordered. Positions 13 to 31 (RVRENHQRRLKKQDNKPEM) are enriched in basic and acidic residues. The CP-type G domain occupies 112–274 (YYDGIKPIAA…VIDSPGVREF (163 aa)). Residues 160–163 (NKID) and 214–222 (GQSGVGKSS) each bind GTP. Zn(2+) is bound by residues C298, C303, H305, and C311.

This sequence belongs to the TRAFAC class YlqF/YawG GTPase family. RsgA subfamily. Monomer. Associates with 30S ribosomal subunit, binds 16S rRNA. The cofactor is Zn(2+).

Its subcellular location is the cytoplasm. Functionally, one of several proteins that assist in the late maturation steps of the functional core of the 30S ribosomal subunit. Helps release RbfA from mature subunits. May play a role in the assembly of ribosomal proteins into the subunit. Circularly permuted GTPase that catalyzes slow GTP hydrolysis, GTPase activity is stimulated by the 30S ribosomal subunit. The protein is Small ribosomal subunit biogenesis GTPase RsgA of Photorhabdus laumondii subsp. laumondii (strain DSM 15139 / CIP 105565 / TT01) (Photorhabdus luminescens subsp. laumondii).